We begin with the raw amino-acid sequence, 294 residues long: NAD kinase (294 aa).

Asp74 functions as the Proton acceptor in the catalytic mechanism. NAD(+)-binding positions include 74 to 75 (DG), Arg79, 149 to 150 (NE), Asp179, 190 to 195 (TGYSLS), and Ala214.

This sequence belongs to the NAD kinase family. A divalent metal cation is required as a cofactor.

The protein resides in the cytoplasm. The enzyme catalyses NAD(+) + ATP = ADP + NADP(+) + H(+). Its function is as follows. Involved in the regulation of the intracellular balance of NAD and NADP, and is a key enzyme in the biosynthesis of NADP. Catalyzes specifically the phosphorylation on 2'-hydroxyl of the adenosine moiety of NAD to yield NADP. The polypeptide is NAD kinase (Flavobacterium johnsoniae (strain ATCC 17061 / DSM 2064 / JCM 8514 / BCRC 14874 / CCUG 350202 / NBRC 14942 / NCIMB 11054 / UW101) (Cytophaga johnsonae)).